A 553-amino-acid chain; its full sequence is Protein PALS2 (553 aa).

L27 domains are found at residues 1–48 and 49–107; these read MQQV…EDSK and LEAV…YDSP. In terms of domain architecture, PDZ spans 129-208; sequence ILGIHKKAGE…SVTLKILPSY (80 aa). In terms of domain architecture, SH3 spans 228–297; sequence VRQVFVKCHF…PSQFLEEKRK (70 aa). Residues 351–538 enclose the Guanylate kinase-like domain; sequence RKTLVLIGAQ…AFEKLQTAIE (188 aa). Tyrosine 513 is modified (phosphotyrosine).

This sequence belongs to the MAGUK family. In terms of assembly, interacts with CADM1. Interacts with the LIN7 proteins.

It is found in the membrane. This Mus musculus (Mouse) protein is Protein PALS2.